We begin with the raw amino-acid sequence, 346 residues long: Holliday junction branch migration complex subunit RuvB (346 aa).

The tract at residues 1 to 182 is large ATPase domain (RuvB-L); that stretch reads MSEAARLIAP…FGIPVRLNFY (182 aa). ATP contacts are provided by residues Leu-21, Arg-22, Gly-63, Lys-66, Thr-67, Thr-68, 129–131, Arg-172, Tyr-182, and Arg-219; that span reads EDF. Mg(2+) is bound at residue Thr-67. The segment at 183 to 253 is small ATPAse domain (RuvB-S); that stretch reads TVEELELIVR…IADEALTRLL (71 aa). The interval 256–346 is head domain (RuvB-H); it reads SMGLDQLDRR…SQFRLTLEDD (91 aa). Positions 292, 311, and 316 each coordinate DNA.

This sequence belongs to the RuvB family. In terms of assembly, homohexamer. Forms an RuvA(8)-RuvB(12)-Holliday junction (HJ) complex. HJ DNA is sandwiched between 2 RuvA tetramers; dsDNA enters through RuvA and exits via RuvB. An RuvB hexamer assembles on each DNA strand where it exits the tetramer. Each RuvB hexamer is contacted by two RuvA subunits (via domain III) on 2 adjacent RuvB subunits; this complex drives branch migration. In the full resolvosome a probable DNA-RuvA(4)-RuvB(12)-RuvC(2) complex forms which resolves the HJ.

The protein localises to the cytoplasm. The catalysed reaction is ATP + H2O = ADP + phosphate + H(+). In terms of biological role, the RuvA-RuvB-RuvC complex processes Holliday junction (HJ) DNA during genetic recombination and DNA repair, while the RuvA-RuvB complex plays an important role in the rescue of blocked DNA replication forks via replication fork reversal (RFR). RuvA specifically binds to HJ cruciform DNA, conferring on it an open structure. The RuvB hexamer acts as an ATP-dependent pump, pulling dsDNA into and through the RuvAB complex. RuvB forms 2 homohexamers on either side of HJ DNA bound by 1 or 2 RuvA tetramers; 4 subunits per hexamer contact DNA at a time. Coordinated motions by a converter formed by DNA-disengaged RuvB subunits stimulates ATP hydrolysis and nucleotide exchange. Immobilization of the converter enables RuvB to convert the ATP-contained energy into a lever motion, pulling 2 nucleotides of DNA out of the RuvA tetramer per ATP hydrolyzed, thus driving DNA branch migration. The RuvB motors rotate together with the DNA substrate, which together with the progressing nucleotide cycle form the mechanistic basis for DNA recombination by continuous HJ branch migration. Branch migration allows RuvC to scan DNA until it finds its consensus sequence, where it cleaves and resolves cruciform DNA. The sequence is that of Holliday junction branch migration complex subunit RuvB from Sinorhizobium medicae (strain WSM419) (Ensifer medicae).